Reading from the N-terminus, the 329-residue chain is 4-hydroxythreonine-4-phosphate dehydrogenase (329 aa).

Substrate contacts are provided by His-136 and Thr-137. 3 residues coordinate a divalent metal cation: His-166, His-211, and His-266. Substrate contacts are provided by Lys-274, Asn-283, and Arg-292.

The protein belongs to the PdxA family. Homodimer. The cofactor is Zn(2+). Mg(2+) is required as a cofactor. It depends on Co(2+) as a cofactor.

It localises to the cytoplasm. The enzyme catalyses 4-(phosphooxy)-L-threonine + NAD(+) = 3-amino-2-oxopropyl phosphate + CO2 + NADH. It functions in the pathway cofactor biosynthesis; pyridoxine 5'-phosphate biosynthesis; pyridoxine 5'-phosphate from D-erythrose 4-phosphate: step 4/5. In terms of biological role, catalyzes the NAD(P)-dependent oxidation of 4-(phosphooxy)-L-threonine (HTP) into 2-amino-3-oxo-4-(phosphooxy)butyric acid which spontaneously decarboxylates to form 3-amino-2-oxopropyl phosphate (AHAP). In Escherichia fergusonii (strain ATCC 35469 / DSM 13698 / CCUG 18766 / IAM 14443 / JCM 21226 / LMG 7866 / NBRC 102419 / NCTC 12128 / CDC 0568-73), this protein is 4-hydroxythreonine-4-phosphate dehydrogenase.